Consider the following 281-residue polypeptide: sn-glycerol-3-phosphate transport system permease protein UgpE (281 aa).

6 consecutive transmembrane segments (helical) span residues 16–36, 85–105, 113–133, 142–162, 202–222, and 247–267; these read LILG…AATL, FSIT…IVWF, FFWM…FPTV, LDSY…TFLF, ALFV…LLII, and WNSV…IVLV. Residues 77–268 enclose the ABC transmembrane type-1 domain; it reads LLNSFVMAFS…IPPVVIVLVM (192 aa).

It belongs to the binding-protein-dependent transport system permease family. UgpAE subfamily. The complex is composed of two ATP-binding proteins (UgpC), two transmembrane proteins (UgpA and UgpE) and a solute-binding protein (UgpB).

The protein resides in the cell inner membrane. Part of the ABC transporter complex UgpBAEC involved in sn-glycerol-3-phosphate (G3P) import. Probably responsible for the translocation of the substrate across the membrane. Can also transport glycerophosphoryl diesters, which are hydrolyzed to G3P and alcohol during transport. The G3P moiety can be detected in the cytoplasm whereas the corresponding alcohol is usually found in the culture medium. It was proposed by Yang et al that the complex could also transport glycerol-2-phosphate (G2P) in vivo, but it was shown later by Wuttge et al that UgpB does not bind G2P, questioning this transport activity. G2P might be converted in the periplasm to G3P before its transport. The polypeptide is sn-glycerol-3-phosphate transport system permease protein UgpE (Escherichia coli (strain K12)).